The following is a 219-amino-acid chain: Zinc finger C2HC domain-containing protein 1B (219 aa).

C2HC/C3H-type zinc fingers lie at residues 14-43 (ELFP…LFNK) and 117-146 (DYIQ…QESR). The Zn(2+) site is built by Cys18, Cys21, His33, Cys37, Cys121, Cys124, His136, and Cys140. The tract at residues 190–219 (EASAAPTRPAVDPASGAKLRQGFAKSSKKD) is disordered.

The protein belongs to the ZC2HC1 family. Zn(2+) serves as cofactor.

The chain is Zinc finger C2HC domain-containing protein 1B (ZC2HC1B) from Bos taurus (Bovine).